A 378-amino-acid chain; its full sequence is 8-demethyl-8-alpha-L-rhamnosyl tetracenomycin-C 2'-O-methyltransferase (378 aa).

S-adenosyl-L-methionine is bound by residues 195 to 201, Ser-210, Asp-227, 245 to 246, and Asp-268; these read EIGVGGY and DQ. Asp-268 contacts Mg(2+). Residue His-271 is the Proton acceptor of the active site. Residues Glu-296 and Asp-297 each coordinate Mg(2+).

It belongs to the methyltransferase OleY/MycE family. Requires Mg(2+) as cofactor.

The catalysed reaction is 8-demethyl-8-alpha-L-rhamnosyl-tetracenomycin C + S-adenosyl-L-methionine = 8-demethyl-8-(2-O-methyl-alpha-L-rhamnosyl)-tetracenomycin C + S-adenosyl-L-homocysteine + H(+). The protein operates within antibiotic biosynthesis. In terms of biological role, O-methyltransferase involved in the biosynthesis of the permethylated L-rhamnose moiety of elloramycin, an antitumor polyketide. Mediates the methylation of the hydroxy groups at the 2'-position after the sugar moiety has been attached to the aglycon. The protein is 8-demethyl-8-alpha-L-rhamnosyl tetracenomycin-C 2'-O-methyltransferase of Streptomyces olivaceus.